A 250-amino-acid polypeptide reads, in one-letter code: MTAQTCCPPTHDDALARARAGESLWRLGALAFGHPVEEFHRALLDGSFHEAVDAAWSALTGRPWPREAPPARFADLEAGYIAAFEHGRGGKRLASLLAGEHKDLLAGQAPPRLHAERRRFYRHFGLRQATADEGRVDEPDHLACLLEFMAVLSHLEAAAIVGGRDPGPVRRAARDFLVRYVEPMLALIAAVLRRPSEPPLDATLVRLTRDLHGFADSRIAELAAQVGPYRSAEARSDSAPDAAAHQNLWG.

The segment at 231-250 (SAEARSDSAPDAAAHQNLWG) is disordered.

It belongs to the type II DMSO reductase enzyme chaperone family.

Its subcellular location is the cytoplasm. In terms of biological role, may function as a system-specific chaperone protein essential for the assembly of an active dimethyl sulfide dehydrogenase DdhABC. This is Dimethyl sulfide dehydrogenase assembly chaperone protein (ddhD) from Rhodovulum sulfidophilum (Rhodobacter sulfidophilus).